The sequence spans 533 residues: Beta-xylosidase (533 aa).

The active-site Proton acceptor is the Asp14. The Proton donor role is filled by Glu186.

The protein belongs to the glycosyl hydrolase 43 family. As to quaternary structure, homodimer.

Its subcellular location is the cell membrane. The catalysed reaction is Hydrolysis of (1-&gt;4)-beta-D-xylans, to remove successive D-xylose residues from the non-reducing termini.. The chain is Beta-xylosidase (xynB) from Bacillus subtilis (strain 168).